Reading from the N-terminus, the 900-residue chain is DNA mismatch repair protein MutS (900 aa).

637–644 (GPNMAGKS) contacts ATP.

Belongs to the DNA mismatch repair MutS family.

Functionally, this protein is involved in the repair of mismatches in DNA. It is possible that it carries out the mismatch recognition step. This protein has a weak ATPase activity. The polypeptide is DNA mismatch repair protein MutS (Methanosarcina mazei (strain ATCC BAA-159 / DSM 3647 / Goe1 / Go1 / JCM 11833 / OCM 88) (Methanosarcina frisia)).